Reading from the N-terminus, the 114-residue chain is Cuticle protein CP1158 (114 aa).

Q1 is modified (pyrrolidone carboxylic acid). Tandem repeats lie at residues 1 to 17, 26 to 43, 70 to 87, and 95 to 112.

Calcified shell.

The sequence is that of Cuticle protein CP1158 from Cancer pagurus (Rock crab).